A 567-amino-acid polypeptide reads, in one-letter code: MHGRLKVKTSEEQAEAKRLEREQKLKLYQSATQAVFQKRQAGELDESVLELTSQILGANPDFATLWNCRREVLQQLETQKSPEELAALVKAELGFLESCLRVNPKSYGTWHHRCWLLGRLPEPNWTRELELCARFLEVDERNFHCWDYRRFVATQAAVPPAEELAFTDSLITRNFSNYSSWHYRSCLLPQLHPQPDSGPQGRLPEDVLLKELELVQNAFFTDPNDQSAWFYHRWLLGRADPQDALRCLHVSREEACLTVSFSRPLLVGSRTEILLLMVDDSPLIVEWRTPDGRNRPSHVWLCDLPAASLNDQLPQHTFRVIWTAGDVQKECVLLKGRQEGWCRDSTTDEQLFRCELSVEKSTVLQSELESCKELQELEPENKWCLLTIILLMRALDPLLYEKETLRYFQTLKAVDPMRAAYLDDLRSKFLLENSVLKMEYAEVRVLHLAHKDLTVLCHLEQLLLVTHLDLSHNRLRTLPPALAALRCLEVLQASDNAIESLDGVTNLPRLQELLLCNNRLQRPAVLQPLASCPRLVLLNLQGNPLCQAVGILEQLAELPPSVNSILT.

PFTA repeat units follow at residues 44 to 78 (LDESVLELTSQILGANPDFATLWNCRREVLQQLET), 88 to 122 (LVKAELGFLESCLRVNPKSYGTWHHRCWLLGRLPE), 124 to 158 (NWTRELELCARFLEVDERNFHCWDYRRFVATQAAV), 159 to 193 (PPAEELAFTDSLITRNFSNYSSWHYRSCLLPQLHP), 207 to 241 (VLLKELELVQNAFFTDPNDQSAWFYHRWLLGRADP), and 363 to 397 (VLQSELESCKELQELEPENKWCLLTIILLMRALDP). Residue Ser98 is modified to Phosphoserine. 5 LRR repeats span residues 442-463 (EVRVLHLAHKDLTVLCHLEQLL), 464-486 (LVTHLDLSHNRLRTLPPALAALR), 487-508 (CLEVLQASDNAIESLDGVTNLP), 509-530 (RLQELLLCNNRLQRPAVLQPLA), and 534-555 (RLVLLNLQGNPLCQAVGILEQL).

The protein belongs to the protein prenyltransferase subunit alpha family. Heterotrimer composed of RABGGTA, RABGGTB and CHM; within this trimer, RABGGTA and RABGGTB form the catalytic component B, while CHM (component A) mediates peptide substrate binding. The Rab GGTase dimer (RGGT) interacts with CHM (component A) prior to Rab protein binding; the association is stabilized by geranylgeranyl pyrophosphate (GGpp). The CHM:RGGT:Rab complex is destabilized by GGpp. Interacts with non-phosphorylated form of RAB8A; phosphorylation of RAB8A at 'Thr-72' disrupts this interaction.

The catalysed reaction is geranylgeranyl diphosphate + L-cysteinyl-[protein] = S-geranylgeranyl-L-cysteinyl-[protein] + diphosphate. The enzymatic reaction requires the aid of a Rab escort protein (also called component A), such as CHM. Catalyzes the transfer of a geranylgeranyl moiety from geranylgeranyl diphosphate to both cysteines of Rab proteins with the C-terminal sequence -XXCC, -XCXC and -CCXX, such as RAB1A, RAB3A, RAB5A and RAB7A. The polypeptide is Geranylgeranyl transferase type-2 subunit alpha (RABGGTA) (Pongo abelii (Sumatran orangutan)).